A 1706-amino-acid polypeptide reads, in one-letter code: Histone acetyltransferase HAC12 (1706 aa).

Disordered regions lie at residues 1-33, 251-284, 397-456, and 524-543; these read MNVQ…MQNL, TNNN…NSHM, VSRV…LGKT, and QNSQ…SDSS. The segment covering 397–406 has biased composition (polar residues); sequence VSRVNSSLSH. Residues 407–434 are compositionally biased toward low complexity; sequence QQQFQQPPNRFQQQPNQIQQQQQQFLNQ. The segment at 637–716 adopts a TAZ-type 1 zinc-finger fold; the sequence is HDPKFKNQQR…DPRCPVCVPV (80 aa). Positions 791–909 are disordered; it reads TESCKSSIVS…PELTSKSRKP (119 aa). The segment covering 794–805 has biased composition (polar residues); sequence CKSSIVSTTEAD. Basic and acidic residues-rich tracts occupy residues 809–829 and 870–896; these read DAER…KVEI and PKQE…KEEL. A PHD-type zinc finger spans residues 998-1075; sequence HYFCIPCYNE…EYTCPYCYVI (78 aa). The CBP/p300-type HAT domain occupies 1090–1526; that stretch reads VLGAKDLPRT…VLYHLHNPTA (437 aa). Acetyl-CoA is bound by residues 1213–1215, 1232–1233, and W1288; these read LDS and RT. 2 ZZ-type zinc fingers span residues 1408–1471 and 1528–1581; these read HLQH…IADI and AFVT…SLAD. 16 residues coordinate Zn(2+): C1413, C1416, C1428, C1431, C1437, C1440, H1453, H1461, C1533, C1536, C1548, C1551, C1557, C1560, H1569, and H1571. Residues 1588–1671 form a TAZ-type 2 zinc finger; that stretch reads EARQLRVLQL…ECDVPRCGDL (84 aa).

The protein resides in the nucleus. The catalysed reaction is L-lysyl-[protein] + acetyl-CoA = N(6)-acetyl-L-lysyl-[protein] + CoA + H(+). Functionally, acetyltransferase enzyme. Acetylates histones, giving a specific tag for transcriptional activation. The chain is Histone acetyltransferase HAC12 (HAC12) from Arabidopsis thaliana (Mouse-ear cress).